Consider the following 263-residue polypeptide: HTH-type transcriptional repressor NanR (263 aa).

Residues 1 to 25 (MDVMNAFDSQAEDSPTSLGRSLRRR) are disordered. In terms of domain architecture, HTH gntR-type spans 30 to 98 (KKLSEMVEEE…NGERARVSRP (69 aa)). Residues 58–77 (ERELMAFFNVGRPSVREALA) constitute a DNA-binding region (H-T-H motif).

The protein belongs to the NanR family.

Transcriptional repressor that controls expression of the genes required for the catabolism of sialic acids. This chain is HTH-type transcriptional repressor NanR, found in Salmonella schwarzengrund (strain CVM19633).